Here is a 147-residue protein sequence, read N- to C-terminus: Male-specific protein scotti (147 aa).

Residues 55–93 are disordered; it reads PQEPPLGVFPAQGGPNGPPRRRKKRSFYTMTKPTPPCQS. Residues 82–93 are compositionally biased toward polar residues; the sequence is YTMTKPTPPCQS. N128 carries an N-linked (GlcNAc...) asparagine glycan.

The protein belongs to the male-specific scotti family. In terms of tissue distribution, expressed in primary spermatocytes and round spermatids. Low expression is seen in very short elongating cysts, but were detected at high levels in a few longer spermatid cysts.

In terms of biological role, post-meiotically transcribed gene that has a role in late spermiogenesis; required for actin cone progression during spermatid individualization. This Drosophila melanogaster (Fruit fly) protein is Male-specific protein scotti.